Consider the following 310-residue polypeptide: tRNA-cytidine(32) 2-sulfurtransferase (310 aa).

The short motif at 45-50 (SGGKDS) is the PP-loop motif element. 3 residues coordinate [4Fe-4S] cluster: cysteine 120, cysteine 123, and cysteine 211.

This sequence belongs to the TtcA family. Homodimer. Mg(2+) is required as a cofactor. [4Fe-4S] cluster serves as cofactor.

The protein localises to the cytoplasm. It carries out the reaction cytidine(32) in tRNA + S-sulfanyl-L-cysteinyl-[cysteine desulfurase] + AH2 + ATP = 2-thiocytidine(32) in tRNA + L-cysteinyl-[cysteine desulfurase] + A + AMP + diphosphate + H(+). It functions in the pathway tRNA modification. In terms of biological role, catalyzes the ATP-dependent 2-thiolation of cytidine in position 32 of tRNA, to form 2-thiocytidine (s(2)C32). The sulfur atoms are provided by the cysteine/cysteine desulfurase (IscS) system. The polypeptide is tRNA-cytidine(32) 2-sulfurtransferase (Shewanella sp. (strain ANA-3)).